The primary structure comprises 1404 residues: DNA-directed RNA polymerase subunit beta' (1404 aa).

Zn(2+)-binding residues include cysteine 70, cysteine 72, cysteine 85, and cysteine 88. Residues aspartate 460, aspartate 462, and aspartate 464 each contribute to the Mg(2+) site. Zn(2+) contacts are provided by cysteine 814, cysteine 888, cysteine 895, and cysteine 898.

Belongs to the RNA polymerase beta' chain family. As to quaternary structure, the RNAP catalytic core consists of 2 alpha, 1 beta, 1 beta' and 1 omega subunit. When a sigma factor is associated with the core the holoenzyme is formed, which can initiate transcription. It depends on Mg(2+) as a cofactor. Requires Zn(2+) as cofactor.

The catalysed reaction is RNA(n) + a ribonucleoside 5'-triphosphate = RNA(n+1) + diphosphate. In terms of biological role, DNA-dependent RNA polymerase catalyzes the transcription of DNA into RNA using the four ribonucleoside triphosphates as substrates. This is DNA-directed RNA polymerase subunit beta' from Shewanella loihica (strain ATCC BAA-1088 / PV-4).